The following is a 347-amino-acid chain: RNA 3'-terminal phosphate cyclase (347 aa).

ATP-binding positions include Gln-101 and 286–289 (HMAD). Residue His-312 is the Tele-AMP-histidine intermediate of the active site.

This sequence belongs to the RNA 3'-terminal cyclase family. Type 1 subfamily.

Its subcellular location is the cytoplasm. It carries out the reaction a 3'-end 3'-phospho-ribonucleotide-RNA + ATP = a 3'-end 2',3'-cyclophospho-ribonucleotide-RNA + AMP + diphosphate. Functionally, catalyzes the conversion of 3'-phosphate to a 2',3'-cyclic phosphodiester at the end of RNA. The mechanism of action of the enzyme occurs in 3 steps: (A) adenylation of the enzyme by ATP; (B) transfer of adenylate to an RNA-N3'P to produce RNA-N3'PP5'A; (C) and attack of the adjacent 2'-hydroxyl on the 3'-phosphorus in the diester linkage to produce the cyclic end product. The biological role of this enzyme is unknown but it is likely to function in some aspects of cellular RNA processing. This Pyrobaculum neutrophilum (strain DSM 2338 / JCM 9278 / NBRC 100436 / V24Sta) (Thermoproteus neutrophilus) protein is RNA 3'-terminal phosphate cyclase.